The primary structure comprises 555 residues: Splicing factor U2af large subunit A (555 aa).

The interval 1 to 165 is disordered; the sequence is MRDYEGNGVD…ISGFDMAPPT (165 aa). Composition is skewed to basic and acidic residues over residues 23–81 and 90–127; these read ISRD…EKDR and RDRS…DRED. Basic residues predominate over residues 143-155; sequence SKSRSRSPSKSKR. RRM domains lie at 221–304, 341–419, and 460–546; these read RRVY…RPSD, DRIF…RANQ, and EVVT…YPEN.

The protein belongs to the splicing factor SR family. Expressed in stems, leaves and apical buds.

The protein resides in the nucleus. Its function is as follows. Necessary for the splicing of pre-mRNA. Binds to the U -enriched regions of plant introns. The sequence is that of Splicing factor U2af large subunit A (U2AF65A) from Nicotiana plumbaginifolia (Leadwort-leaved tobacco).